The following is a 264-amino-acid chain: tRNA-uridine aminocarboxypropyltransferase A (264 aa).

Residues Cys25, Cys28, Cys35, and Cys37 each coordinate Zn(2+). Positions 144-147 (DATW) match the DXTW motif. Residues 245–264 (RPKLLKKRFQNQQPLEQEEE) form a disordered region. The span at 254 to 264 (QNQQPLEQEEE) shows a compositional bias: polar residues.

Belongs to the TDD superfamily. DTWD2 family.

The catalysed reaction is a uridine in tRNA + S-adenosyl-L-methionine = a 3-[(3S)-3-amino-3-carboxypropyl]uridine in tRNA + S-methyl-5'-thioadenosine + H(+). In terms of biological role, catalyzes the formation of 3-(3-amino-3-carboxypropyl)uridine (acp3U) at position 20a in the D-loop of several cytoplasmic tRNAs (acp3U(20a)). This Arabidopsis thaliana (Mouse-ear cress) protein is tRNA-uridine aminocarboxypropyltransferase A.